A 518-amino-acid chain; its full sequence is Membrane-bound lytic murein transglycosylase F (518 aa).

A signal peptide spans 1–21 (MKKLKINYLFIGILALLLAVA). Positions 22 to 269 (LWPSIPWFGK…RIEEKYLGHG (248 aa)) are non-LT domain. Positions 270-518 (DDFDYVDTRT…SRKGSEEKQN (249 aa)) are LT domain. The active site involves Glu-314.

It in the N-terminal section; belongs to the bacterial solute-binding protein 3 family. In the C-terminal section; belongs to the transglycosylase Slt family.

It localises to the cell outer membrane. It carries out the reaction Exolytic cleavage of the (1-&gt;4)-beta-glycosidic linkage between N-acetylmuramic acid (MurNAc) and N-acetylglucosamine (GlcNAc) residues in peptidoglycan, from either the reducing or the non-reducing ends of the peptidoglycan chains, with concomitant formation of a 1,6-anhydrobond in the MurNAc residue.. Functionally, murein-degrading enzyme that degrades murein glycan strands and insoluble, high-molecular weight murein sacculi, with the concomitant formation of a 1,6-anhydromuramoyl product. Lytic transglycosylases (LTs) play an integral role in the metabolism of the peptidoglycan (PG) sacculus. Their lytic action creates space within the PG sacculus to allow for its expansion as well as for the insertion of various structures such as secretion systems and flagella. In Shigella dysenteriae serotype 1 (strain Sd197), this protein is Membrane-bound lytic murein transglycosylase F.